A 98-amino-acid chain; its full sequence is Small ribosomal subunit protein uS19 (98 aa).

Disordered stretches follow at residues methionine 1–valine 30 and arginine 78–lysine 98. Positions proline 9–lysine 24 are enriched in basic and acidic residues.

This sequence belongs to the universal ribosomal protein uS19 family.

In terms of biological role, protein S19 forms a complex with S13 that binds strongly to the 16S ribosomal RNA. The sequence is that of Small ribosomal subunit protein uS19 from Anaeromyxobacter dehalogenans (strain 2CP-1 / ATCC BAA-258).